Consider the following 390-residue polypeptide: MCNNEAKMSELLSVQSDAPAKKINLMDLTRQQMREFFKELGEKPFRADQLVKWIYHFGEDNFDNMTNINKKLREKLKAVAEIKAPEVAVEQRSADGTIKWAMQVGEQQVETVYIPEADRATLCVSSQVGCALACTFCSTAQQGFNRNLTVSEIIGQVWRASKIIGNFGVTGVRPITNVVMMGMGEPLLNVANVVPAMEIMLDDFAYGLSKRRVTLSTSGVVPALDNLSKMIDVALAISLHAPNDELRDEIVPINKKYNIKTLIDSVNRYLNVSNANHGKVTIEYVMLDHVNDGVEHAHQLAEVLKNTPCKINLIPWNPFPEAPYAKSSNTRIDRFQKTLMEYDFTVIIRKTRGDDIDAACGQLAGDVIDRTKRTAMKRQFGQNIGVTEVN.

Glutamate 110 functions as the Proton acceptor in the catalytic mechanism. Residues 116–355 (EADRATLCVS…VIIRKTRGDD (240 aa)) form the Radical SAM core domain. A disulfide bridge links cysteine 123 with cysteine 360. Positions 130, 134, and 137 each coordinate [4Fe-4S] cluster. S-adenosyl-L-methionine is bound by residues 184–185 (GE), serine 216, 238–240 (SLH), and asparagine 317. Catalysis depends on cysteine 360, which acts as the S-methylcysteine intermediate.

It belongs to the radical SAM superfamily. RlmN family. Requires [4Fe-4S] cluster as cofactor.

Its subcellular location is the cytoplasm. It catalyses the reaction adenosine(2503) in 23S rRNA + 2 reduced [2Fe-2S]-[ferredoxin] + 2 S-adenosyl-L-methionine = 2-methyladenosine(2503) in 23S rRNA + 5'-deoxyadenosine + L-methionine + 2 oxidized [2Fe-2S]-[ferredoxin] + S-adenosyl-L-homocysteine. The enzyme catalyses adenosine(37) in tRNA + 2 reduced [2Fe-2S]-[ferredoxin] + 2 S-adenosyl-L-methionine = 2-methyladenosine(37) in tRNA + 5'-deoxyadenosine + L-methionine + 2 oxidized [2Fe-2S]-[ferredoxin] + S-adenosyl-L-homocysteine. Specifically methylates position 2 of adenine 2503 in 23S rRNA and position 2 of adenine 37 in tRNAs. m2A2503 modification seems to play a crucial role in the proofreading step occurring at the peptidyl transferase center and thus would serve to optimize ribosomal fidelity. The sequence is that of Dual-specificity RNA methyltransferase RlmN from Haemophilus influenzae (strain ATCC 51907 / DSM 11121 / KW20 / Rd).